The sequence spans 305 residues: Spermatogenesis-associated protein 4 (305 aa).

The region spanning 49 to 155 is the Calponin-homology (CH) domain; that stretch reads SRLSRSVLRW…EEVYTLLTHR (107 aa).

Its subcellular location is the nucleus. In terms of biological role, may play a role in apoptosis regulation. The polypeptide is Spermatogenesis-associated protein 4 (SPATA4) (Pan troglodytes (Chimpanzee)).